We begin with the raw amino-acid sequence, 198 residues long: Sorcin (198 aa).

EF-hand domains are found at residues glycine 29 to alanine 64, phenylalanine 70 to asparagine 103, alanine 100 to arginine 135, and phenylalanine 134 to leucine 169. Residues aspartate 83, aspartate 85, serine 87, threonine 89, glutamate 94, aspartate 113, aspartate 115, serine 117, threonine 119, and glutamate 124 each contribute to the Ca(2+) site.

In terms of assembly, homodimer. Interacts with GCA, RYR2 and ANXA7. Detected in cardiac myocytes.

The protein localises to the cytoplasm. It localises to the sarcoplasmic reticulum membrane. In terms of biological role, calcium-binding protein that modulates excitation-contraction coupling in the heart. Contributes to calcium homeostasis in the heart sarcoplasmic reticulum. Modulates the activity of RYR2 calcium channels. The polypeptide is Sorcin (SRI) (Homo sapiens (Human)).